A 472-amino-acid chain; its full sequence is Pyruvate kinase (472 aa).

Position 33 (Arg33) interacts with substrate. Asn35, Ser37, and Asp67 together coordinate K(+). 35–38 (NFSH) is a binding site for ATP. Residues Arg74 and Lys155 each coordinate ATP. Residue Glu220 participates in Mg(2+) binding. 3 residues coordinate substrate: Gly243, Asp244, and Thr276. Residue Asp244 coordinates Mg(2+).

This sequence belongs to the pyruvate kinase family. Homotetramer. Mg(2+) is required as a cofactor. Requires K(+) as cofactor.

The enzyme catalyses pyruvate + ATP = phosphoenolpyruvate + ADP + H(+). Its pathway is carbohydrate degradation; glycolysis; pyruvate from D-glyceraldehyde 3-phosphate: step 5/5. The sequence is that of Pyruvate kinase (pyk) from Mycobacterium tuberculosis (strain CDC 1551 / Oshkosh).